A 41-amino-acid chain; its full sequence is Histone H2B.3, sperm (41 aa).

Residues 1-41 (MPRSPSKSSPKKGSPRKASPKRGGKGAKRAGKGGRRRTVVK) form a disordered region. 4 short sequence motifs (SPKK motif) span residues 4–7 (SPSK), 9–12 (SPKK), 14–17 (SPRK), and 19–22 (SPKR). The span at 9-41 (SPKKGSPRKASPKRGGKGAKRAGKGGRRRTVVK) shows a compositional bias: basic residues. Phosphoserine occurs at positions 14 and 19.

It belongs to the histone H2B family. As to quaternary structure, the nucleosome is a histone octamer containing two molecules each of H2A, H2B, H3 and H4 assembled in one H3-H4 heterotetramer and two H2A-H2B heterodimers. The octamer wraps approximately 147 bp of DNA. In terms of processing, monoubiquitination gives a specific tag for epigenetic transcriptional activation and is also prerequisite for histone H3 'Lys-4' and 'Lys-79' methylation. Phosphorylated on SPKK motifs 3 and 4; which may regulate DNA binding. Dephosphorylated during maturation of spermatids to mature sperm and rephosphorylated at fertilization.

Its subcellular location is the nucleus. It localises to the chromosome. In terms of biological role, core component of nucleosome. Nucleosomes wrap and compact DNA into chromatin, limiting DNA accessibility to the cellular machineries which require DNA as a template. Histones thereby play a central role in transcription regulation, DNA repair, DNA replication and chromosomal stability. DNA accessibility is regulated via a complex set of post-translational modifications of histones, also called histone code, and nucleosome remodeling. This Echinus esculentus (Sea urchin) protein is Histone H2B.3, sperm.